A 91-amino-acid chain; its full sequence is Small ribosomal subunit protein bS16 (91 aa).

It belongs to the bacterial ribosomal protein bS16 family.

The protein is Small ribosomal subunit protein bS16 of Limosilactobacillus reuteri (strain DSM 20016) (Lactobacillus reuteri).